Reading from the N-terminus, the 193-residue chain is uncharacterized protein (193 aa).

A disordered region spans residues 1-84 (MTSKCSKWHE…RRSNQRIQLY (84 aa)). Basic residues predominate over residues 43 to 78 (SSPRRSSPRRSPRRSSPRRSSPRRSSPRRSSPRRSN).

This sequence belongs to the IIV-6 378R family.

This is an uncharacterized protein from Invertebrate iridescent virus 6 (IIV-6).